A 208-amino-acid polypeptide reads, in one-letter code: Uracil phosphoribosyltransferase (208 aa).

5-phospho-alpha-D-ribose 1-diphosphate-binding positions include Arg78, Arg103, and 130-138 (DPMLATGGT). Uracil contacts are provided by residues Ile193 and 198–200 (GDA). Asp199 lines the 5-phospho-alpha-D-ribose 1-diphosphate pocket.

It belongs to the UPRTase family. The cofactor is Mg(2+).

It carries out the reaction UMP + diphosphate = 5-phospho-alpha-D-ribose 1-diphosphate + uracil. The protein operates within pyrimidine metabolism; UMP biosynthesis via salvage pathway; UMP from uracil: step 1/1. With respect to regulation, allosterically activated by GTP. Its function is as follows. Catalyzes the conversion of uracil and 5-phospho-alpha-D-ribose 1-diphosphate (PRPP) to UMP and diphosphate. In Desulforapulum autotrophicum (strain ATCC 43914 / DSM 3382 / VKM B-1955 / HRM2) (Desulfobacterium autotrophicum), this protein is Uracil phosphoribosyltransferase.